A 103-amino-acid polypeptide reads, in one-letter code: Small ribosomal subunit protein uS10 (103 aa).

Belongs to the universal ribosomal protein uS10 family. Part of the 30S ribosomal subunit.

In terms of biological role, involved in the binding of tRNA to the ribosomes. In Azoarcus sp. (strain BH72), this protein is Small ribosomal subunit protein uS10.